We begin with the raw amino-acid sequence, 355 residues long: UDP-N-acetylglucosamine--N-acetylmuramyl-(pentapeptide) pyrophosphoryl-undecaprenol N-acetylglucosamine transferase (355 aa).

UDP-N-acetyl-alpha-D-glucosamine contacts are provided by residues 14 to 16, N126, R162, S190, I243, 262 to 267, and Q288; these read SGG and ALTVSE.

This sequence belongs to the glycosyltransferase 28 family. MurG subfamily.

It is found in the cell inner membrane. The catalysed reaction is di-trans,octa-cis-undecaprenyl diphospho-N-acetyl-alpha-D-muramoyl-L-alanyl-D-glutamyl-meso-2,6-diaminopimeloyl-D-alanyl-D-alanine + UDP-N-acetyl-alpha-D-glucosamine = di-trans,octa-cis-undecaprenyl diphospho-[N-acetyl-alpha-D-glucosaminyl-(1-&gt;4)]-N-acetyl-alpha-D-muramoyl-L-alanyl-D-glutamyl-meso-2,6-diaminopimeloyl-D-alanyl-D-alanine + UDP + H(+). It functions in the pathway cell wall biogenesis; peptidoglycan biosynthesis. Functionally, cell wall formation. Catalyzes the transfer of a GlcNAc subunit on undecaprenyl-pyrophosphoryl-MurNAc-pentapeptide (lipid intermediate I) to form undecaprenyl-pyrophosphoryl-MurNAc-(pentapeptide)GlcNAc (lipid intermediate II). In Blochmanniella pennsylvanica (strain BPEN), this protein is UDP-N-acetylglucosamine--N-acetylmuramyl-(pentapeptide) pyrophosphoryl-undecaprenol N-acetylglucosamine transferase.